Here is an 802-residue protein sequence, read N- to C-terminus: MQSIFNNKYQFKNIETKYNTLWDTTKLYKWKNSGTNQFVIDTPPPTISGQLHIGHVFSYCHTDFIARYQRMLGKDVFYPIGFDDNGLPTERLVEKTKKIRATDISRKEFKTICTQVSHEFRIQFKQLFQSIGISYDWDLEYHTISKDIQKISQTSFINLYNKGKLYRKLQPIFWDCIDKTAIARAEVEENELSSFMNTIAFSTEAGKAINIATTRPELMPACVAVFFNPSDIRYQDLLGQNAIVPIFGNKVKILSDDQVKIDKGTGLVMCCTFGDEMDVYWWNKHNLDTKIIISKSGTIDHLNTLQGQDVCKQLHGLSITEARALIIEILERNNLLIQKQEITHNVKCAERSGAPIEILLSHQWFIKVVDIKHELLKQVQKINWHPQSMRKQIEIWIEGLNWDWCISRQRYFGVPFPVWYSKDGKIILPDINKLPIDPTNDLPEGYQDTEIEVETDVMDTWATSSLSTQFHNISATPADLRAQSHEIIRSWAFYTILQAYYHNNDIPWKNIMISGWCLAEDKTKMSKSKGNVLTPNKLLDEYGADVVRYWTANSKLGADTTFSNEILKLGKRFTTKLWNASKFVSMFIDQYSEPDLQYITETMDKWILSKLYKVIVKATESFNSFEYCIALDCIESFFWKDFCDNYLELSKKRAYGELISKQEHLSAVNTLSFVLRELLKMLAPFMPYVTEEIYRTLYSSNNSIHSHNTWPAADVNLYNESDELLGETFIEILNQVRKVKASAQLSVKYKINKLIINKHFPVSLENDLKAVCNADCIVYDNRQNDNKEQLLVSVEFENVQIT.

Residues 45–55 carry the 'HIGH' region motif; sequence PTISGQLHIGH. The 'KMSKS' region signature appears at 524–528; the sequence is KMSKS. K527 serves as a coordination point for ATP.

This sequence belongs to the class-I aminoacyl-tRNA synthetase family. ValS type 2 subfamily. Monomer.

It is found in the cytoplasm. The catalysed reaction is tRNA(Val) + L-valine + ATP = L-valyl-tRNA(Val) + AMP + diphosphate. Its function is as follows. Catalyzes the attachment of valine to tRNA(Val). As ValRS can inadvertently accommodate and process structurally similar amino acids such as threonine, to avoid such errors, it has a 'posttransfer' editing activity that hydrolyzes mischarged Thr-tRNA(Val) in a tRNA-dependent manner. The sequence is that of Valine--tRNA ligase from Ehrlichia canis (strain Jake).